The following is a 465-amino-acid chain: Kynurenine 3-monooxygenase (465 aa).

Residues 1-26 (MSPGIVSQEVNGRQEPTEAARDERHG) form a disordered region. Residues 15–25 (EPTEAARDERH) show a composition bias toward basic and acidic residues. The next 2 membrane-spanning stretches (helical) occupy residues 405–427 (LLFR…SMPY) and 440–462 (LLKR…IYAQ).

This sequence belongs to the aromatic-ring hydroxylase family. KMO subfamily. FAD is required as a cofactor.

The protein resides in the mitochondrion. It is found in the membrane. It catalyses the reaction L-kynurenine + NADPH + O2 + H(+) = 3-hydroxy-L-kynurenine + NADP(+) + H2O. Its pathway is cofactor biosynthesis; NAD(+) biosynthesis; quinolinate from L-kynurenine: step 1/3. Catalyzes the hydroxylation of L-kynurenine (L-Kyn) to form 3-hydroxy-L-kynurenine (L-3OHKyn). Required for synthesis of quinolinic acid. This chain is Kynurenine 3-monooxygenase, found in Drosophila melanogaster (Fruit fly).